The chain runs to 470 residues: MKNCSRRQLLKTTLFSTALFSVPAPLLAATRPTLTIPPLFETRRGKPIFLNLQNTQASLLPGKRTEVWGFNGVYLGPTIKIKKDDFAKLNWKNNLPQFVAMNIQGLQASGELIGGIAKNLQKDETWAPIIPITQAPSTCWYHACTLANSAYQTYRGLLGLWMIEDKESTKLGLPQKYGVDDIPLILQDMQLNTEGTQLFQQHQGRFIGERLFVNGQEAPYLTVPRGLVRLRVLNASLSRTYELRFDDEREFTLIAQDLGFLPQGQKRNVVMLAPSERVEILVDLNDGENVSLITGTKRGILDNISHFFGSDGELIDNTILELRPEGLAGAFEKKEQTWQFNTDAPSLLSTKVQQERAFHIDVGNATINKNRLDPRRLDVSAKLGSVERWTLSASSPVGFAIRGAKFIVESVNGKALEASEIGWKDSVLINGKVSILVKFENTSSNNYPFTFGASDLMLADKGCIGLMLVQ.

The segment at residues 1 to 29 (MKNCSRRQLLKTTLFSTALFSVPAPLLAA) is a signal peptide (tat-type signal).

The protein belongs to the FtsP family. In terms of processing, predicted to be exported by the Tat system. The position of the signal peptide cleavage has not been experimentally proven.

It is found in the periplasm. Cell division protein that is required for growth during stress conditions. May be involved in protecting or stabilizing the divisomal assembly under conditions of stress. The protein is Cell division protein FtsP of Aggregatibacter aphrophilus (strain NJ8700) (Haemophilus aphrophilus).